Consider the following 202-residue polypeptide: Orotate phosphoribosyltransferase (202 aa).

Residue 113-121 (EDIITTGGS) coordinates 5-phospho-alpha-D-ribose 1-diphosphate. T117 and R145 together coordinate orotate.

Belongs to the purine/pyrimidine phosphoribosyltransferase family. PyrE subfamily. Homodimer. Mg(2+) serves as cofactor.

The catalysed reaction is orotidine 5'-phosphate + diphosphate = orotate + 5-phospho-alpha-D-ribose 1-diphosphate. It participates in pyrimidine metabolism; UMP biosynthesis via de novo pathway; UMP from orotate: step 1/2. In terms of biological role, catalyzes the transfer of a ribosyl phosphate group from 5-phosphoribose 1-diphosphate to orotate, leading to the formation of orotidine monophosphate (OMP). This chain is Orotate phosphoribosyltransferase, found in Campylobacter lari (strain RM2100 / D67 / ATCC BAA-1060).